The primary structure comprises 260 residues: tRNA (guanine-N(7)-)-methyltransferase (260 aa).

Residues 1 to 37 (MIHDPNDAGLPDQLPTPSSEAENSPAGDTTPPEEALH) are disordered. Residues glutamate 90, glutamate 115, aspartate 142, and aspartate 165 each coordinate S-adenosyl-L-methionine. Aspartate 165 is an active-site residue. Residues lysine 169, aspartate 201, and 236 to 239 (TKFE) each bind substrate.

The protein belongs to the class I-like SAM-binding methyltransferase superfamily. TrmB family.

It carries out the reaction guanosine(46) in tRNA + S-adenosyl-L-methionine = N(7)-methylguanosine(46) in tRNA + S-adenosyl-L-homocysteine. The protein operates within tRNA modification; N(7)-methylguanine-tRNA biosynthesis. Functionally, catalyzes the formation of N(7)-methylguanine at position 46 (m7G46) in tRNA. The protein is tRNA (guanine-N(7)-)-methyltransferase of Paraburkholderia xenovorans (strain LB400).